Here is a 417-residue protein sequence, read N- to C-terminus: Adenosylhomocysteinase (417 aa).

The substrate site is built by threonine 53, aspartate 125, and glutamate 149. 150–152 (TTT) is an NAD(+) binding site. Lysine 179 and aspartate 183 together coordinate substrate. Residues asparagine 184, 213 to 218 (GYGWVG), glutamate 236, asparagine 271, 292 to 294 (AGH), and asparagine 339 contribute to the NAD(+) site.

Belongs to the adenosylhomocysteinase family. The cofactor is NAD(+).

Its subcellular location is the cytoplasm. It catalyses the reaction S-adenosyl-L-homocysteine + H2O = L-homocysteine + adenosine. The protein operates within amino-acid biosynthesis; L-homocysteine biosynthesis; L-homocysteine from S-adenosyl-L-homocysteine: step 1/1. Functionally, may play a key role in the regulation of the intracellular concentration of adenosylhomocysteine. The protein is Adenosylhomocysteinase of Saccharolobus solfataricus (strain ATCC 35092 / DSM 1617 / JCM 11322 / P2) (Sulfolobus solfataricus).